A 386-amino-acid chain; its full sequence is Adiponectin receptor protein 2 (386 aa).

The tract at residues 1-72 is disordered; that stretch reads MNEPAKHRLG…ECHDDNSQED (72 aa). Over 1–147 the chain is Cytoplasmic; that stretch reads MNEPAKHRLG…SIFRIHTETG (147 aa). Positions 15–31 are enriched in basic and acidic residues; that stretch reads PEPDIRLRKGHQLDDTR. The span at 58-72 shows a compositional bias: acidic residues; it reads SPEEPECHDDNSQED. A helical transmembrane segment spans residues 148 to 168; that stretch reads NIWTHLLGCVFFLCLGIFYMF. The Extracellular segment spans residues 169–181; sequence RPNISFVAPLQEK. The chain crosses the membrane as a helical span at residues 182-202; sequence VVFGLFFLGAILCLSFSWLFH. Histidine 202 provides a ligand contact to Zn(2+). Residues 203–213 are Cytoplasmic-facing; it reads TVYCHSEGVSR. A helical membrane pass occupies residues 214–234; the sequence is LFSKLDYSGIALLIMGSFVPW. The Extracellular segment spans residues 235 to 245; that stretch reads LYYSFYCNPQP. A helical transmembrane segment spans residues 246-266; the sequence is CFIYLIVICVLGIAAIIVSQW. The Cytoplasmic segment spans residues 267 to 273; sequence DMFATPQ. A helical membrane pass occupies residues 274–294; sequence YRGVRAGVFVGLGLSGIIPTL. The Extracellular portion of the chain corresponds to 295–309; the sequence is HYVISEGFLKAATIG. The helical transmembrane segment at 310 to 330 threads the bilayer; it reads QIGWLMLMASLYITGAALYAA. Topologically, residues 331–348 are cytoplasmic; sequence RIPERFFPGKCDIWFHSH. Histidine 348 and histidine 352 together coordinate Zn(2+). The chain crosses the membrane as a helical span at residues 349 to 369; it reads QLFHIFVVAGAFVHFHGVSNL. Residues 370 to 386 are Extracellular-facing; it reads QEFRFMIGGGCTEEDAL.

It belongs to the ADIPOR family. May form homooligomers and heterooligomers with ADIPOR1. Interacts with APPL2 (via BAR domain); ADIPOQ dissociates this interaction. As to expression, detected in liver and quadriceps muscle (at protein level). Highly expressed in liver. Highly expressed in white adipose tissue, and at intermediate levels in brown adipose tissue. Expressed at intermediate level in heart, kidney, lung and skeletal muscle. Weakly expressed in brain, spleen and testis.

Its subcellular location is the cell membrane. Its function is as follows. Receptor for ADIPOQ, an essential hormone secreted by adipocytes that regulates glucose and lipid metabolism. Required for normal body fat and glucose homeostasis. ADIPOQ-binding activates a signaling cascade that leads to increased PPARA activity, and ultimately to increased fatty acid oxidation and glucose uptake. Has intermediate affinity for globular and full-length adiponectin. Required for normal revascularization after chronic ischemia caused by severing of blood vessels. In Mus musculus (Mouse), this protein is Adiponectin receptor protein 2.